Consider the following 319-residue polypeptide: Acetyl esterase (319 aa).

Positions 91 to 93 (HGG) match the Involved in the stabilization of the negatively charged intermediate by the formation of the oxyanion hole motif. Residues serine 165, aspartate 262, and histidine 292 contribute to the active site.

The protein belongs to the 'GDXG' lipolytic enzyme family. As to quaternary structure, homodimer. Interacts with MalT and MelA.

It is found in the cytoplasm. Functionally, displays esterase activity towards short chain fatty esters (acyl chain length of up to 8 carbons). Able to hydrolyze triacetylglycerol (triacetin) and tributyrylglycerol (tributyrin), but not trioleylglycerol (triolein) or cholesterol oleate. Negatively regulates MalT activity by antagonizing maltotriose binding. Inhibits MelA galactosidase activity. This chain is Acetyl esterase, found in Shigella flexneri.